We begin with the raw amino-acid sequence, 321 residues long: uncharacterized protein (321 aa).

Residues 1 to 56 enclose the HTH lacI-type domain; sequence MANIKDIAEKAGVSVTTVSRVINNHPYVSEDKRKRVFEAMESLEYTRNIHAVHLSK. Positions 4–23 form a DNA-binding region, H-T-H motif; sequence IKDIAEKAGVSVTTVSRVIN.

This is an uncharacterized protein from Bacillus subtilis (strain 168).